A 246-amino-acid polypeptide reads, in one-letter code: DNA polymerase sliding clamp 3 (246 aa).

The protein belongs to the PCNA family. In terms of assembly, the subunits circularize to form a toroid; DNA passes through its center. Replication factor C (RFC) is required to load the toroid on the DNA. Forms dimeric complexes with PCNA1 and PCNA2, and trimeric complexes with PCNA123 and PCNA323; does not form homotrimers. Crystal structures show a heterotetramer of 2 PCNA2 and 2 PCNA3, which would be large enough to clamp a Holliday junction.

In terms of biological role, sliding clamp subunit that acts as a moving platform for DNA processing. Responsible for tethering the catalytic subunit of DNA polymerase and other proteins to DNA during high-speed replication. Both trimeric complexes inhibit DNA ligase and both 3'-5' and 5'-3' activity of Hel308 (Hjm) helicase, but stimulate Hjc, the Holliday junction cleavage enzyme. The polypeptide is DNA polymerase sliding clamp 3 (Sulfurisphaera tokodaii (strain DSM 16993 / JCM 10545 / NBRC 100140 / 7) (Sulfolobus tokodaii)).